A 115-amino-acid polypeptide reads, in one-letter code: Large ribosomal subunit protein bL20 (115 aa).

Belongs to the bacterial ribosomal protein bL20 family.

In terms of biological role, binds directly to 23S ribosomal RNA and is necessary for the in vitro assembly process of the 50S ribosomal subunit. It is not involved in the protein synthesizing functions of that subunit. This Prochlorococcus marinus (strain MIT 9215) protein is Large ribosomal subunit protein bL20.